A 98-amino-acid chain; its full sequence is MSADPRHYDVIVSPVITEKATNLTEQNKVVFRVAPKATKPQIKDAVEKLFDVKVTGVNTLTTKGKKKFFRGQRGQRSDVKKAIVTLAEGDTIDVTTGL.

Belongs to the universal ribosomal protein uL23 family. In terms of assembly, part of the 50S ribosomal subunit. Contacts protein L29, and trigger factor when it is bound to the ribosome.

Its function is as follows. One of the early assembly proteins it binds 23S rRNA. One of the proteins that surrounds the polypeptide exit tunnel on the outside of the ribosome. Forms the main docking site for trigger factor binding to the ribosome. This chain is Large ribosomal subunit protein uL23, found in Methylorubrum populi (strain ATCC BAA-705 / NCIMB 13946 / BJ001) (Methylobacterium populi).